The following is a 256-amino-acid chain: Alcohol dehydrogenase (256 aa).

F12–I41 contacts NAD(+). S140 serves as a coordination point for substrate. Catalysis depends on Y153, which acts as the Proton acceptor.

Belongs to the short-chain dehydrogenases/reductases (SDR) family. In terms of assembly, homodimer.

The catalysed reaction is a primary alcohol + NAD(+) = an aldehyde + NADH + H(+). The enzyme catalyses a secondary alcohol + NAD(+) = a ketone + NADH + H(+). The chain is Alcohol dehydrogenase from Drosophila ananassae (Fruit fly).